Here is a 511-residue protein sequence, read N- to C-terminus: Maturase K (511 aa).

It belongs to the intron maturase 2 family. MatK subfamily.

The protein localises to the plastid. It localises to the chloroplast. Usually encoded in the trnK tRNA gene intron. Probably assists in splicing its own and other chloroplast group II introns. In Brachypodium distachyon (Purple false brome), this protein is Maturase K.